A 199-amino-acid chain; its full sequence is Peroxiredoxin-1 (199 aa).

Ser-2 is modified (N-acetylserine). Residues 6 to 165 (AKIGHPAPNF…TLRLVQAFQF (160 aa)) form the Thioredoxin domain. Lys-7 bears the N6-acetyllysine; alternate mark. Residue Lys-7 forms a Glycyl lysine isopeptide (Lys-Gly) (interchain with G-Cter in SUMO2); alternate linkage. An N6-acetyllysine mark is found at Lys-16 and Lys-27. Phosphoserine is present on Ser-32. At Lys-35 the chain carries N6-acetyllysine; alternate. Lys-35 is subject to N6-succinyllysine; alternate. Catalysis depends on Cys-52, which acts as the Cysteine sulfenic acid (-SOH) intermediate. Thr-90 is subject to Phosphothreonine. Lys-120 is covalently cross-linked (Glycyl lysine isopeptide (Lys-Gly) (interchain with G-Cter in SUMO2)). Lys-136 is subject to N6-acetyllysine. Positions 176 to 199 (GWKPGSDTIKPDVQKSKEYFSKQK) are disordered. Over residues 184-199 (IKPDVQKSKEYFSKQK) the composition is skewed to basic and acidic residues. A Glycyl lysine isopeptide (Lys-Gly) (interchain with G-Cter in SUMO1) cross-link involves residue Lys-185. An N6-acetyllysine modification is found at Lys-197.

The protein belongs to the peroxiredoxin family. AhpC/Prx1 subfamily. In terms of assembly, homodimer; disulfide-linked, upon oxidation. 5 homodimers assemble to form a ring-like decamer. Interacts with GDPD5; forms a mixed-disulfide with GDPD5. Interacts with SESN1 and SESN2. Interacts with FAM107A. In terms of processing, phosphorylated on Thr-90 during the M-phase, which leads to a decrease in enzymatic activity. Acetylation increases reducing activity and resistance to superoxidation. Deacetylated by HDAC6 which decreases reducing activity. Detected in heart and skeletal muscle (at protein level).

It is found in the cytoplasm. The catalysed reaction is a hydroperoxide + [thioredoxin]-dithiol = an alcohol + [thioredoxin]-disulfide + H2O. Thiol-specific peroxidase that catalyzes the reduction of hydrogen peroxide and organic hydroperoxides to water and alcohols, respectively. Plays a role in cell protection against oxidative stress by detoxifying peroxides and as sensor of hydrogen peroxide-mediated signaling events. Might participate in the signaling cascades of growth factors and tumor necrosis factor-alpha by regulating the intracellular concentrations of H(2)O(2). Reduces an intramolecular disulfide bond in GDPD5 that gates the ability to GDPD5 to drive postmitotic motor neuron differentiation. This chain is Peroxiredoxin-1 (PRDX1), found in Myotis lucifugus (Little brown bat).